Here is a 512-residue protein sequence, read N- to C-terminus: ATP synthase subunit alpha, chloroplastic (512 aa).

170–177 (GDRQTGKT) is an ATP binding site.

The protein belongs to the ATPase alpha/beta chains family. F-type ATPases have 2 components, CF(1) - the catalytic core - and CF(0) - the membrane proton channel. CF(1) has five subunits: alpha(3), beta(3), gamma(1), delta(1), epsilon(1). CF(0) has four main subunits: a, b, b' and c.

Its subcellular location is the plastid. The protein resides in the chloroplast thylakoid membrane. It carries out the reaction ATP + H2O + 4 H(+)(in) = ADP + phosphate + 5 H(+)(out). Its function is as follows. Produces ATP from ADP in the presence of a proton gradient across the membrane. The alpha chain is a regulatory subunit. The sequence is that of ATP synthase subunit alpha, chloroplastic from Chaetosphaeridium globosum (Charophycean green alga).